A 280-amino-acid chain; its full sequence is Probable ketoamine kinase lp_1983 (280 aa).

ATP is bound at residue 87 to 89 (DWL). The active-site Proton acceptor is the Asp189.

This sequence belongs to the fructosamine kinase family.

It carries out the reaction N(6)-(D-ribulosyl)-L-lysine + ATP = N(6)-(3-O-phospho-D-ribulosyl)-L-lysine + ADP + H(+). The enzyme catalyses N-(D-ribulosyl)-cadaverine + ATP = N-(3-O-phospho-D-ribulosyl)-cadaverine + ADP + H(+). It catalyses the reaction N(6)-(D-erythrulosyl)-L-lysine + ATP = N(6)-(3-O-phospho-D-erythrulosyl)-L-lysine + ADP + H(+). The catalysed reaction is N-(D-erythrulosyl)-cadaverine + ATP = N-(3-O-phospho-D-erythrulosyl)-cadaverine + ADP + H(+). It carries out the reaction N(6)-D-ribulosyl-L-lysyl-[protein] + ATP = N(6)-(3-O-phospho-D-ribulosyl)-L-lysyl-[protein] + ADP + H(+). The enzyme catalyses N(6)-(D-erythrulosyl)-L-lysyl-[protein] + ATP = N(6)-(3-O-phospho-D-erythrulosyl)-L-lysyl-[protein] + ADP + H(+). In terms of biological role, ketoamine kinase that phosphorylates ketoamines, such as erythruloselysine, erythrulosecadaverine, ribuloselysine and ribulosecadaverine, on the third carbon of the sugar moiety to generate ketoamine 3-phosphate. Has higher activity on free lysine (erythruloselysine and ribuloselysine), than on ribuloselysine and erythruloselysine residues on glycated proteins. This Lactiplantibacillus plantarum (strain ATCC BAA-793 / NCIMB 8826 / WCFS1) (Lactobacillus plantarum) protein is Probable ketoamine kinase lp_1983.